Reading from the N-terminus, the 232-residue chain is Putative N-acetylmannosamine-6-phosphate 2-epimerase (232 aa).

Belongs to the NanE family.

The enzyme catalyses an N-acyl-D-glucosamine 6-phosphate = an N-acyl-D-mannosamine 6-phosphate. Its pathway is amino-sugar metabolism; N-acetylneuraminate degradation; D-fructose 6-phosphate from N-acetylneuraminate: step 3/5. Converts N-acetylmannosamine-6-phosphate (ManNAc-6-P) to N-acetylglucosamine-6-phosphate (GlcNAc-6-P). The chain is Putative N-acetylmannosamine-6-phosphate 2-epimerase from Proteus mirabilis (strain HI4320).